A 931-amino-acid chain; its full sequence is Protein translocase subunit SecA (931 aa).

Residues Q87, 105–109, and D515 each bind ATP; that span reads GEGKT. Positions 915, 917, 926, and 927 each coordinate Zn(2+).

The protein belongs to the SecA family. Monomer and homodimer. Part of the essential Sec protein translocation apparatus which comprises SecA, SecYEG and auxiliary proteins SecDF-YajC and YidC. It depends on Zn(2+) as a cofactor.

Its subcellular location is the cell inner membrane. The protein resides in the cytoplasm. It carries out the reaction ATP + H2O + cellular proteinSide 1 = ADP + phosphate + cellular proteinSide 2.. Part of the Sec protein translocase complex. Interacts with the SecYEG preprotein conducting channel. Has a central role in coupling the hydrolysis of ATP to the transfer of proteins into and across the cell membrane, serving both as a receptor for the preprotein-SecB complex and as an ATP-driven molecular motor driving the stepwise translocation of polypeptide chains across the membrane. This Burkholderia pseudomallei (strain 1106a) protein is Protein translocase subunit SecA.